Consider the following 351-residue polypeptide: UDP-3-O-acylglucosamine N-acyltransferase (351 aa).

The active-site Proton acceptor is the histidine 240.

It belongs to the transferase hexapeptide repeat family. LpxD subfamily. Homotrimer.

It carries out the reaction a UDP-3-O-[(3R)-3-hydroxyacyl]-alpha-D-glucosamine + a (3R)-hydroxyacyl-[ACP] = a UDP-2-N,3-O-bis[(3R)-3-hydroxyacyl]-alpha-D-glucosamine + holo-[ACP] + H(+). Its pathway is bacterial outer membrane biogenesis; LPS lipid A biosynthesis. Catalyzes the N-acylation of UDP-3-O-acylglucosamine using 3-hydroxyacyl-ACP as the acyl donor. Is involved in the biosynthesis of lipid A, a phosphorylated glycolipid that anchors the lipopolysaccharide to the outer membrane of the cell. This chain is UDP-3-O-acylglucosamine N-acyltransferase, found in Ectopseudomonas mendocina (strain ymp) (Pseudomonas mendocina).